Reading from the N-terminus, the 536-residue chain is UDP-N-acetylmuramate--L-alanine ligase (536 aa).

133 to 139 (GSSGKTT) contributes to the ATP binding site.

It belongs to the MurCDEF family.

The protein localises to the cytoplasm. The catalysed reaction is UDP-N-acetyl-alpha-D-muramate + L-alanine + ATP = UDP-N-acetyl-alpha-D-muramoyl-L-alanine + ADP + phosphate + H(+). The protein operates within cell wall biogenesis; peptidoglycan biosynthesis. Its function is as follows. Cell wall formation. The protein is UDP-N-acetylmuramate--L-alanine ligase of Wolbachia sp. subsp. Brugia malayi (strain TRS).